The chain runs to 330 residues: Palmitoyltransferase SWF1 (330 aa).

A helical transmembrane segment spans residues 1–21 (MLLFLVFILVVSQVVLLLLSP). Residues 22 to 50 (QFRDKFIFRWYYDEVYKPMILDNSRYRIK) lie on the Cytoplasmic side of the membrane. A helical transmembrane segment spans residues 51–71 (FYVVPVFYLSVYSYMVYIFYS). The Lumenal segment spans residues 72–86 (RTFAIISPMLTSIET). The helical transmembrane segment at 87–107 (YVVIPLMLILPLFFGSMSMII) threads the bilayer. Residues 108–181 (KPDSSNAHQI…GMGNYMYFYS (74 aa)) lie on the Cytoplasmic side of the membrane. The DHHC domain occupies 134–184 (HECRTCKQVKPARSKHCTVCNSCIYLADHHCVWINNCVGMGNYMYFYSFLC). The helical transmembrane segment at 182–202 (FLCSNLLLLSYSFIRLIFIQF) threads the bilayer. At 203–218 (NKSAYNTTPTGEKSLL) the chain is on the lumenal side. The chain crosses the membrane as a helical span at residues 219-239 (ILSILCGSFTVILAVYCYFVF). Topologically, residues 240-330 (ELVNSGMTTN…FINNLREFIG (91 aa)) are cytoplasmic.

It belongs to the DHHC palmitoyltransferase family. SWF1 subfamily.

Its subcellular location is the endoplasmic reticulum membrane. It catalyses the reaction L-cysteinyl-[protein] + hexadecanoyl-CoA = S-hexadecanoyl-L-cysteinyl-[protein] + CoA. In terms of biological role, palmitoyltransferase that targets several endosomal SNAREs. Palmitoylates the SNAREs at cysteine residues close to the cytoplasmic end of their transmembrane domain. May have a role in the cellular quality control of transmembrane domain-containing proteins. The sequence is that of Palmitoyltransferase SWF1 (SWF1) from Candida glabrata (strain ATCC 2001 / BCRC 20586 / JCM 3761 / NBRC 0622 / NRRL Y-65 / CBS 138) (Yeast).